Here is a 440-residue protein sequence, read N- to C-terminus: 3-phosphoshikimate 1-carboxyvinyltransferase (440 aa).

K31, S32, and R36 together coordinate 3-phosphoshikimate. A phosphoenolpyruvate-binding site is contributed by K31. Residues G104 and R133 each contribute to the phosphoenolpyruvate site. Positions 178, 180, 328, and 355 each coordinate 3-phosphoshikimate. Q180 serves as a coordination point for phosphoenolpyruvate. The active-site Proton acceptor is D328. Phosphoenolpyruvate contacts are provided by R359 and R401.

The protein belongs to the EPSP synthase family. In terms of assembly, monomer.

It is found in the cytoplasm. The enzyme catalyses 3-phosphoshikimate + phosphoenolpyruvate = 5-O-(1-carboxyvinyl)-3-phosphoshikimate + phosphate. The protein operates within metabolic intermediate biosynthesis; chorismate biosynthesis; chorismate from D-erythrose 4-phosphate and phosphoenolpyruvate: step 6/7. Catalyzes the transfer of the enolpyruvyl moiety of phosphoenolpyruvate (PEP) to the 5-hydroxyl of shikimate-3-phosphate (S3P) to produce enolpyruvyl shikimate-3-phosphate and inorganic phosphate. The sequence is that of 3-phosphoshikimate 1-carboxyvinyltransferase from Thermosynechococcus vestitus (strain NIES-2133 / IAM M-273 / BP-1).